The primary structure comprises 161 residues: Protein ilm1 (161 aa).

Residues 1-6 (MLFSFR) lie on the Cytoplasmic side of the membrane. Residues 7–27 (AIVLFYCCMLTFAGIGFLWNP) traverse the membrane as a helical segment. Residues 28 to 56 (KFVVESGLVALIGASMEVKPLIVTQDNLS) are Lumenal-facing. Residues 57–77 (TLALSGLVFLILGMIYTISLL) traverse the membrane as a helical segment. Over 78–81 (QSNF) the chain is Cytoplasmic. Residues 82–102 (LFFSGITPIRAIFDFILTGFI) form a helical membrane-spanning segment. The Lumenal portion of the chain corresponds to 103–112 (YLKKEHIASN). The helical transmembrane segment at 113 to 133 (SLTFTFAFCDLMWQFWMFAAM) threads the bilayer. The Cytoplasmic portion of the chain corresponds to 134 to 161 (SEERAKYLKNQKKAEELAARKAREVEES).

This sequence belongs to the ILM1 family.

The protein localises to the endoplasmic reticulum. The protein resides in the membrane. The protein is Protein ilm1 of Schizosaccharomyces pombe (strain 972 / ATCC 24843) (Fission yeast).